Here is a 155-residue protein sequence, read N- to C-terminus: 6,7-dimethyl-8-ribityllumazine synthase (155 aa).

Residues W18, 52-54, and 76-78 each bind 5-amino-6-(D-ribitylamino)uracil; these read AFE and LVV. Catalysis depends on R84, which acts as the Proton donor. S109 is a 5-amino-6-(D-ribitylamino)uracil binding site. Position 123 (H123) interacts with (2S)-2-hydroxy-3-oxobutyl phosphate.

Belongs to the DMRL synthase family.

The catalysed reaction is (2S)-2-hydroxy-3-oxobutyl phosphate + 5-amino-6-(D-ribitylamino)uracil = 6,7-dimethyl-8-(1-D-ribityl)lumazine + phosphate + 2 H2O + H(+). Its pathway is cofactor biosynthesis; riboflavin biosynthesis; riboflavin from 2-hydroxy-3-oxobutyl phosphate and 5-amino-6-(D-ribitylamino)uracil: step 1/2. Catalyzes the formation of 6,7-dimethyl-8-ribityllumazine by condensation of 5-amino-6-(D-ribitylamino)uracil with 3,4-dihydroxy-2-butanone 4-phosphate. This is the penultimate step in the biosynthesis of riboflavin. This is 6,7-dimethyl-8-ribityllumazine synthase from Rhodococcus erythropolis (Arthrobacter picolinophilus).